Here is a 1286-residue protein sequence, read N- to C-terminus: Lysine-specific demethylase JMJ705 (1286 aa).

The JmjN domain occupies 25–66 (APEFRPTAAEFADPVSYILKIEPAAAPYGICKVVPPLPPPPK). A disordered region spans residues 82–105 (PDDRSPSFPTRHQQVGLCPRRTRP). One can recognise a JmjC domain in the interval 201-367 (ETAWNMRGVA…IAKEAAIRRA (167 aa)). Fe cation contacts are provided by H244, E246, and H335. Over residues 641–679 (PNSSNNVGCVGTKLSSSSTERQERPSSQNAHCNGSSVIS) the composition is skewed to polar residues. Disordered stretches follow at residues 641-686 (PNSS…KGVR), 1013-1060 (AEPV…HSQE), and 1077-1164 (PAGT…PKQA). Residues 1119-1136 (HASGQKSNVQEANANSAS) are compositionally biased toward polar residues. The C2H2-type 1; degenerate zinc finger occupies 1167–1189 (YSCDIEGCSMSFRTKRDLSLHKS). 3 C2H2-type zinc fingers span residues 1190–1214 (DICPVKGCGKKFFSHKYLLQHRKVH), 1220–1244 (LTCPWKGCNMAFKWPWARTEHLRVH), and 1250–1276 (YVCHEPGCAQTFRFVSDFSRHKRKTGH).

Fe(2+) serves as cofactor. As to expression, expressed in leaves and flag leaves. Expressed at low levels in roots, shoots, stems and panicles.

The protein resides in the nucleus. It carries out the reaction N(6),N(6),N(6)-trimethyl-L-lysyl(27)-[histone H3] + 2 2-oxoglutarate + 2 O2 = N(6)-methyl-L-lysyl(27)-[histone H3] + 2 formaldehyde + 2 succinate + 2 CO2. Histone demethylase that demethylates 'Lys-27' (H3K27me) of histone H3 with a specific activity for H3K27me3 and H3K27me2. No activity on H3K4me3, H3K9me3, H3K27me1 and H3K36me3. Involved in biotic stress response. May demethylate H3K27me3-marked defense-related genes and increase their basal and induced expression levels during pathogen infection. The sequence is that of Lysine-specific demethylase JMJ705 (JMJ705) from Oryza sativa subsp. japonica (Rice).